Reading from the N-terminus, the 905-residue chain is Methionine--tRNA ligase, cytoplasmic (905 aa).

Residues 1-75 (MKLFVGEGNP…YFYLSSGHDM (75 aa)) form the GST N-terminal domain. The 128-residue stretch at 72 to 199 (GHDMCDLSNQ…DKGSSVFKPF (128 aa)) folds into the GST C-terminal domain. Positions 271–281 (PYVNNVPHLGN) match the 'HIGH' region motif. Residues 591–595 (KFSKS) carry the 'KMSKS' region motif. Lys-594 is an ATP binding site. Disordered regions lie at residues 813–874 (RFGG…VIDP) and 886–905 (LALA…KKKK). Residues 841-874 (GPERVKELMQELEKQGNHVRELKGKKAEKSVIDP) show a composition bias toward basic and acidic residues. The WHEP-TRS domain occupies 844 to 900 (RVKELMQELEKQGNHVRELKGKKAEKSVIDPEVQKLLALKKELALAEGKSPDPPTQK).

Belongs to the class-I aminoacyl-tRNA synthetase family. As to quaternary structure, monomer. Part of a multisubunit complex that groups tRNA ligases for Arg (RARS1), Asp (DARS1), Gln (QARS1), Ile (IARS1), Leu (LARS1), Lys (KARS1), Met (MARS1) the bifunctional ligase for Glu and Pro (EPRS1) and the auxiliary subunits AIMP1/p43, AIMP2/p38 and EEF1E1/p18.

Its subcellular location is the cytoplasm. It localises to the cytosol. The protein resides in the nucleus. The protein localises to the nucleolus. The catalysed reaction is tRNA(Met) + L-methionine + ATP = L-methionyl-tRNA(Met) + AMP + diphosphate. Catalyzes the specific attachment of an amino acid to its cognate tRNA in a 2 step reaction: the amino acid (AA) is first activated by ATP to form AA-AMP and then transferred to the acceptor end of the tRNA. Plays a role in the synthesis of ribosomal RNA in the nucleolus. This is Methionine--tRNA ligase, cytoplasmic (mars1) from Xenopus laevis (African clawed frog).